Reading from the N-terminus, the 140-residue chain is Nucleoside diphosphate kinase (140 aa).

ATP contacts are provided by Lys11, Phe59, Arg87, Thr93, Arg104, and Asn114. His117 acts as the Pros-phosphohistidine intermediate in catalysis.

The protein belongs to the NDK family. In terms of assembly, homotetramer. The cofactor is Mg(2+).

The protein localises to the cytoplasm. It carries out the reaction a 2'-deoxyribonucleoside 5'-diphosphate + ATP = a 2'-deoxyribonucleoside 5'-triphosphate + ADP. The catalysed reaction is a ribonucleoside 5'-diphosphate + ATP = a ribonucleoside 5'-triphosphate + ADP. Functionally, major role in the synthesis of nucleoside triphosphates other than ATP. The ATP gamma phosphate is transferred to the NDP beta phosphate via a ping-pong mechanism, using a phosphorylated active-site intermediate. In Methylorubrum extorquens (strain CM4 / NCIMB 13688) (Methylobacterium extorquens), this protein is Nucleoside diphosphate kinase.